Here is a 490-residue protein sequence, read N- to C-terminus: Zinc finger protein STP4 (490 aa).

Low complexity-rich tracts occupy residues 1 to 16 (MLVS…SVMS) and 52 to 73 (PSLP…STLN). The segment at 1-85 (MLVSSSFASS…PPPPLTTSYS (85 aa)) is disordered. A phosphoserine mark is found at S153 and S155. The span at 231 to 247 (QQQQQLNSSSSASALPS) shows a compositional bias: low complexity. The segment at 231–273 (QQQQQLNSSSSASALPSIHSPLTNEHTSRYSSSLKDSAKITKQ) is disordered. Polar residues predominate over residues 250–265 (SPLTNEHTSRYSSSLK). The segment at 304 to 326 (HKCPICQRGFARNNDLIRHKKRH) adopts a C2H2-type zinc-finger fold. Positions 338–375 (ESDNNSGADDQDDTARTSANNDSDDSNDKLAASSSSEE) are disordered.

It localises to the cytoplasm. The protein localises to the mitochondrion. Its subcellular location is the nucleus. The sequence is that of Zinc finger protein STP4 (STP4) from Saccharomyces cerevisiae (strain ATCC 204508 / S288c) (Baker's yeast).